The chain runs to 137 residues: Large ribosomal subunit protein uL16 (137 aa).

Belongs to the universal ribosomal protein uL16 family. In terms of assembly, part of the 50S ribosomal subunit.

Binds 23S rRNA and is also seen to make contacts with the A and possibly P site tRNAs. The protein is Large ribosomal subunit protein uL16 of Stenotrophomonas maltophilia (strain K279a).